Consider the following 488-residue polypeptide: Envelope glycoprotein gp62 (488 aa).

An N-terminal signal peptide occupies residues 1 to 20 (MGKFLATLILFFQFCPLIFG). At 21–442 (DYSPSCCTLT…LGLSQWAREA (422 aa)) the chain is on the extracellular side. N-linked (GlcNAc...) asparagine; by host glycans are attached at residues Asn140 and Asn222. The CXXC motif lies at 225 to 228 (CIVC). N-linked (GlcNAc...) asparagine; by host glycans are attached at residues Asn244 and Asn272. Residues 313–333 (AVPVAVWLVSALAMGAGVAGG) form a fusion peptide region. 2 coiled-coil regions span residues 341–387 (ASGK…LLFW) and 397–429 (QEQC…GWGL). Residues 376 to 392 (AQNRRGLDLLFWEQGGL) form an immunosuppression region. A disulfide bridge connects residues Cys393 and Cys400. Residue Asn404 is glycosylated (N-linked (GlcNAc...) asparagine; by host). Residues 443–463 (LQTGITLVALLLLVILAGPCI) traverse the membrane as a helical segment. The S-palmitoyl cysteine; by host moiety is linked to residue Cys462. The Cytoplasmic portion of the chain corresponds to 464–488 (LRQLRHLPSRVRYPHYSLIKPESSL).

The mature envelope protein (Env) consists of a trimer of SU-TM heterodimers attached by non-covalent interactions or by a labile interchain disulfide bond. Post-translationally, specific enzymatic cleavages in vivo yield mature proteins. Envelope glycoproteins are synthesized as an inactive precursor that is N-glycosylated and processed likely by host cell furin or by a furin-like protease in the Golgi to yield the mature SU and TM proteins. The cleavage site between SU and TM requires the minimal sequence [KR]-X-[KR]-R. The transmembrane protein is palmitoylated.

The protein resides in the virion membrane. Its subcellular location is the host cell membrane. In terms of biological role, the surface protein (SU) attaches the virus to the host cell by binding to its receptor. This interaction triggers the refolding of the transmembrane protein (TM) and is thought to activate its fusogenic potential by unmasking its fusion peptide. Fusion occurs at the host cell plasma membrane. The transmembrane protein (TM) acts as a class I viral fusion protein. Under the current model, the protein has at least 3 conformational states: pre-fusion native state, pre-hairpin intermediate state, and post-fusion hairpin state. During viral and target cell membrane fusion, the coiled coil regions (heptad repeats) assume a trimer-of-hairpins structure, positioning the fusion peptide in close proximity to the C-terminal region of the ectodomain. The formation of this structure appears to drive apposition and subsequent fusion of viral and target cell membranes. Membranes fusion leads to delivery of the nucleocapsid into the cytoplasm. The chain is Envelope glycoprotein gp62 (env) from Homo sapiens (Human).